Consider the following 37-residue polypeptide: MKVRPSVKKMCPKCKVIRRRGILRVICDNPRHKQRQG.

Belongs to the bacterial ribosomal protein bL36 family.

The polypeptide is Large ribosomal subunit protein bL36 (Nitratidesulfovibrio vulgaris (strain DSM 19637 / Miyazaki F) (Desulfovibrio vulgaris)).